The primary structure comprises 842 residues: DNA gyrase subunit A (842 aa).

Residues 42-511 form the Topo IIA-type catalytic domain; that stretch reads LPEVRDGLKP…ADGEVSDEDL (470 aa). The O-(5'-phospho-DNA)-tyrosine intermediate role is filled by Tyr130. A GyrA-box motif is present at residues 538-544; that stretch reads QKRGGKG. Residues 822 to 842 form a disordered region; that stretch reads EDEAAESISESDADTAESPEA.

It belongs to the type II topoisomerase GyrA/ParC subunit family. In terms of assembly, heterotetramer, composed of two GyrA and two GyrB chains. In the heterotetramer, GyrA contains the active site tyrosine that forms a transient covalent intermediate with DNA, while GyrB binds cofactors and catalyzes ATP hydrolysis.

It localises to the cytoplasm. It catalyses the reaction ATP-dependent breakage, passage and rejoining of double-stranded DNA.. Its activity is regulated as follows. Inhibited by 4-quinoline drugs (nalidixic acid, ciprofloxacin, ofloxacin), although it is much less sensitive than the corresponding enzyme from E.coli. Its function is as follows. A type II topoisomerase that negatively supercoils closed circular double-stranded (ds) DNA in an ATP-dependent manner to modulate DNA topology and maintain chromosomes in an underwound state. Negative supercoiling favors strand separation, and DNA replication, transcription, recombination and repair, all of which involve strand separation. Also able to catalyze the interconversion of other topological isomers of dsDNA rings, including catenanes and knotted rings. Type II topoisomerases break and join 2 DNA strands simultaneously in an ATP-dependent manner. The chain is DNA gyrase subunit A from Mycolicibacterium smegmatis (strain ATCC 700084 / mc(2)155) (Mycobacterium smegmatis).